Consider the following 217-residue polypeptide: MLDISIAIDGPAGAGKSTIAKIIGNKLNIMYINTGSMYRAVTLMALKNNIEPYDIESLKALINSMNISFNGNNIIVNGKDLEEDIRMPIINNNVSKYAAVEEVRELLVSMQQNISKKYNVVMDGRDIGTVVLKDAPYKFFITASAEVRAKRRLKELKEKGININFRDVLKEIKERDYIDSNRKVNPLKQSKDAILIDTSNFTIEEVVDKICTIIKKD.

Residue 10–18 participates in ATP binding; it reads GPAGAGKST.

Belongs to the cytidylate kinase family. Type 1 subfamily.

The protein resides in the cytoplasm. The enzyme catalyses CMP + ATP = CDP + ADP. It carries out the reaction dCMP + ATP = dCDP + ADP. The polypeptide is Cytidylate kinase (Clostridium botulinum (strain ATCC 19397 / Type A)).